A 960-amino-acid chain; its full sequence is Serine/threonine-protein kinase atg1 (960 aa).

A Protein kinase domain is found at 22-327 (YTRLDEIGRG…FPEFFSNNVI (306 aa)). Residues 28–36 (IGRGSFATV) and lysine 51 each bind ATP. The Proton acceptor role is filled by aspartate 165. 6 disordered regions span residues 333 to 467 (GLLA…RAQE), 503 to 538 (PRLQ…PHAN), 550 to 571 (ARAD…QSPT), 673 to 694 (SAST…SADS), 789 to 815 (RLPP…TADV), and 926 to 960 (AKRS…TPPR). Composition is skewed to polar residues over residues 376 to 388 (PVTT…TPPT) and 520 to 536 (RRTT…SSPH). Over residues 550-566 (ARADSTHQRQHSYERRY) the composition is skewed to basic and acidic residues. The segment covering 789–800 (RLPPDHPSHPDN) has biased composition (basic and acidic residues). The span at 801–815 (HSISSTAGSSSTADV) shows a compositional bias: low complexity. Residues 930–951 (SAPTPTAGSAGKTPTSNISPVT) show a composition bias toward polar residues.

The protein belongs to the protein kinase superfamily. Ser/Thr protein kinase family. APG1/unc-51/ULK1 subfamily. As to quaternary structure, homodimer. Forms a ternary complex with ATG13 and ATG17.

It is found in the cytoplasm. The protein localises to the preautophagosomal structure membrane. It catalyses the reaction L-seryl-[protein] + ATP = O-phospho-L-seryl-[protein] + ADP + H(+). The enzyme catalyses L-threonyl-[protein] + ATP = O-phospho-L-threonyl-[protein] + ADP + H(+). In terms of biological role, serine/threonine protein kinase involved in the cytoplasm to vacuole transport (Cvt) and found to be essential in autophagy, where it is required for the formation of autophagosomes. Involved in the clearance of protein aggregates which cannot be efficiently cleared by the proteasome. Required for selective autophagic degradation of the nucleus (nucleophagy) as well as for mitophagy which contributes to regulate mitochondrial quantity and quality by eliminating the mitochondria to a basal level to fulfill cellular energy requirements and preventing excess ROS production. Also involved in endoplasmic reticulum-specific autophagic process, in selective removal of ER-associated degradation (ERAD) substrates. Plays a key role in ATG9 and ATG23 cycling through the pre-autophagosomal structure and is necessary to promote ATG18 binding to ATG9 through phosphorylation of ATG9. Catalyzes phosphorylation of ATG4, decreasing the interaction between ATG4 and ATG8 and impairing deconjugation of PE-conjugated forms of ATG8. The protein is Serine/threonine-protein kinase atg1 of Penicillium rubens (strain ATCC 28089 / DSM 1075 / NRRL 1951 / Wisconsin 54-1255) (Penicillium chrysogenum).